A 453-amino-acid polypeptide reads, in one-letter code: Bifunctional protein GlmU (453 aa).

The interval 1-228 (MPHWAAVIMA…VHEALGINSR (228 aa)) is pyrophosphorylase. Residues Lys-23, Gln-73, 78–79 (GT), 100–102 (SGD), Gly-139, Glu-153, Asn-168, and Asn-226 contribute to the UDP-N-acetyl-alpha-D-glucosamine site. A Mg(2+)-binding site is contributed by Asp-102. Residue Asn-226 coordinates Mg(2+). Residues 229–249 (AQLAAAEDVARQRILSYWMEE) are linker. Positions 250 to 453 (GVTIIDPRST…IENWVRNKKK (204 aa)) are N-acetyltransferase. UDP-N-acetyl-alpha-D-glucosamine-binding residues include Arg-331 and Lys-349. Residue His-361 is the Proton acceptor of the active site. UDP-N-acetyl-alpha-D-glucosamine contacts are provided by Tyr-364 and Asn-375. Acetyl-CoA contacts are provided by residues Ala-378, 384-385 (NY), Ser-403, Ala-421, and Arg-438.

In the N-terminal section; belongs to the N-acetylglucosamine-1-phosphate uridyltransferase family. It in the C-terminal section; belongs to the transferase hexapeptide repeat family. Homotrimer. The cofactor is Mg(2+).

The protein resides in the cytoplasm. The enzyme catalyses alpha-D-glucosamine 1-phosphate + acetyl-CoA = N-acetyl-alpha-D-glucosamine 1-phosphate + CoA + H(+). It catalyses the reaction N-acetyl-alpha-D-glucosamine 1-phosphate + UTP + H(+) = UDP-N-acetyl-alpha-D-glucosamine + diphosphate. It participates in nucleotide-sugar biosynthesis; UDP-N-acetyl-alpha-D-glucosamine biosynthesis; N-acetyl-alpha-D-glucosamine 1-phosphate from alpha-D-glucosamine 6-phosphate (route II): step 2/2. It functions in the pathway nucleotide-sugar biosynthesis; UDP-N-acetyl-alpha-D-glucosamine biosynthesis; UDP-N-acetyl-alpha-D-glucosamine from N-acetyl-alpha-D-glucosamine 1-phosphate: step 1/1. Its pathway is bacterial outer membrane biogenesis; LPS lipid A biosynthesis. Its function is as follows. Catalyzes the last two sequential reactions in the de novo biosynthetic pathway for UDP-N-acetylglucosamine (UDP-GlcNAc). The C-terminal domain catalyzes the transfer of acetyl group from acetyl coenzyme A to glucosamine-1-phosphate (GlcN-1-P) to produce N-acetylglucosamine-1-phosphate (GlcNAc-1-P), which is converted into UDP-GlcNAc by the transfer of uridine 5-monophosphate (from uridine 5-triphosphate), a reaction catalyzed by the N-terminal domain. The sequence is that of Bifunctional protein GlmU from Desulfitobacterium hafniense (strain Y51).